We begin with the raw amino-acid sequence, 306 residues long: MERDSNTAKSEIFYSNPAIWRHLKDGKGEGMSKSEKRNKHGCRNFTYSIWNCIRPGGWSTWSKWSKCREGIRKRRRTCNNPLPIGTTCSGQKVEKQSCAISSNVPEYLFGSWTSWNPWSRCDCDRSLRIRTRHCKGNSCEGCDKDYEDCRPDECPISKKWSEWTDWVNYGIEQVRFSAWCSSSNVANTEVGIRKETQDSMKHANWSEWHMHPGVAYRYRLLHNSSISIEHHLLSRFTSSCLPLHFAIPIFCFCILTGFLLQNIIYCVVNRFKRRFIRLNYSYDSNPRDYPSHLIRSPGSPKDESFW.

TSP type-1 domains follow at residues 55-102 (PGGW…AISS) and 109-155 (FGSW…DECP). Residues Trp58 and Trp61 are each glycosylated (C-linked (Man) tryptophan). Cystine bridges form between Cys121-Cys149, Cys123-Cys154, and Cys134-Cys139. The helical transmembrane segment at 240–260 (CLPLHFAIPIFCFCILTGFLL) threads the bilayer.

Post-translationally, glycosylated via C-mannosylation by dpy-19 at Trp-58 and Trp-61.

Its subcellular location is the membrane. Required for determination of left/right asymmetry in nervous system. Acts together with unc-40 to control an initial left-right asymmetric polarization of the Q neuroblasts. Mig-21 and unc-40 may control the asymmetry in Wnt signaling response by restricting posterior polarization to one of the 2 Q neuroblasts. Involved in left-side QL posterior migration. In right-side QR, unc-40 and mig-21 pathways mutually inhibit each other in posterior migration, allowing anterior QR migration. In Caenorhabditis elegans, this protein is Abnormal cell migration protein 21 (mig-21).